The chain runs to 185 residues: Elongation factor P (185 aa).

Belongs to the elongation factor P family.

Its subcellular location is the cytoplasm. Its pathway is protein biosynthesis; polypeptide chain elongation. Its function is as follows. Involved in peptide bond synthesis. Stimulates efficient translation and peptide-bond synthesis on native or reconstituted 70S ribosomes in vitro. Probably functions indirectly by altering the affinity of the ribosome for aminoacyl-tRNA, thus increasing their reactivity as acceptors for peptidyl transferase. The protein is Elongation factor P of Streptococcus pyogenes serotype M49 (strain NZ131).